Reading from the N-terminus, the 206-residue chain is Outer-membrane lipoprotein carrier protein (206 aa).

The first 21 residues, 1-21 (MKKLLCAVLLSPLLYSNAVLA), serve as a signal peptide directing secretion.

This sequence belongs to the LolA family. As to quaternary structure, monomer.

The protein resides in the periplasm. Participates in the translocation of lipoproteins from the inner membrane to the outer membrane. Only forms a complex with a lipoprotein if the residue after the N-terminal Cys is not an aspartate (The Asp acts as a targeting signal to indicate that the lipoprotein should stay in the inner membrane). The chain is Outer-membrane lipoprotein carrier protein from Shewanella sp. (strain ANA-3).